The primary structure comprises 325 residues: Lipoyl synthase (325 aa).

Residues 1-33 (MATVIDTLKARGSEDRAARHPEKQNRPDTPVLR) are disordered. The span at 8–33 (LKARGSEDRAARHPEKQNRPDTPVLR) shows a compositional bias: basic and acidic residues. [4Fe-4S] cluster is bound by residues cysteine 64, cysteine 69, cysteine 75, cysteine 90, cysteine 94, cysteine 97, and serine 303. The region spanning 76–292 (WSQKHATMMI…EAIARAKGFL (217 aa)) is the Radical SAM core domain.

It belongs to the radical SAM superfamily. Lipoyl synthase family. [4Fe-4S] cluster serves as cofactor.

The protein resides in the cytoplasm. It catalyses the reaction [[Fe-S] cluster scaffold protein carrying a second [4Fe-4S](2+) cluster] + N(6)-octanoyl-L-lysyl-[protein] + 2 oxidized [2Fe-2S]-[ferredoxin] + 2 S-adenosyl-L-methionine + 4 H(+) = [[Fe-S] cluster scaffold protein] + N(6)-[(R)-dihydrolipoyl]-L-lysyl-[protein] + 4 Fe(3+) + 2 hydrogen sulfide + 2 5'-deoxyadenosine + 2 L-methionine + 2 reduced [2Fe-2S]-[ferredoxin]. It participates in protein modification; protein lipoylation via endogenous pathway; protein N(6)-(lipoyl)lysine from octanoyl-[acyl-carrier-protein]: step 2/2. In terms of biological role, catalyzes the radical-mediated insertion of two sulfur atoms into the C-6 and C-8 positions of the octanoyl moiety bound to the lipoyl domains of lipoate-dependent enzymes, thereby converting the octanoylated domains into lipoylated derivatives. The polypeptide is Lipoyl synthase (Caulobacter vibrioides (strain ATCC 19089 / CIP 103742 / CB 15) (Caulobacter crescentus)).